We begin with the raw amino-acid sequence, 147 residues long: Diaminohydroxyphosphoribosylamino-pyrimidine deaminase (147 aa).

The 123-residue stretch at 1–123 (MNDIFYMKRA…YLKKHGICVK (123 aa)) folds into the CMP/dCMP-type deaminase domain. Histidine 50 lines the Zn(2+) pocket. Glutamate 52 functions as the Proton donor in the catalytic mechanism. The Zn(2+) site is built by cysteine 75 and cysteine 84.

Belongs to the cytidine and deoxycytidylate deaminase family. Zn(2+) serves as cofactor.

It catalyses the reaction 2,5-diamino-6-hydroxy-4-(5-phosphoribosylamino)-pyrimidine + H2O + H(+) = 5-amino-6-(5-phospho-D-ribosylamino)uracil + NH4(+). The protein operates within cofactor biosynthesis; riboflavin biosynthesis; 5-amino-6-(D-ribitylamino)uracil from GTP: step 2/4. The chain is Diaminohydroxyphosphoribosylamino-pyrimidine deaminase (ribD1) from Buchnera aphidicola subsp. Acyrthosiphon pisum (strain APS) (Acyrthosiphon pisum symbiotic bacterium).